The sequence spans 391 residues: 5-amino-6-(D-ribitylamino)uracil--L-tyrosine 4-hydroxyphenyl transferase (391 aa).

In terms of domain architecture, Radical SAM core spans V55–N302. Residues C69, C73, and C76 each coordinate [4Fe-4S] cluster.

It belongs to the radical SAM superfamily. CofH family. Consists of two subunits, CofG and CofH. The cofactor is [4Fe-4S] cluster.

The catalysed reaction is 5-amino-6-(D-ribitylamino)uracil + L-tyrosine + S-adenosyl-L-methionine = 5-amino-5-(4-hydroxybenzyl)-6-(D-ribitylimino)-5,6-dihydrouracil + 2-iminoacetate + 5'-deoxyadenosine + L-methionine + H(+). It functions in the pathway cofactor biosynthesis; coenzyme F0 biosynthesis. In terms of biological role, catalyzes the radical-mediated synthesis of 5-amino-5-(4-hydroxybenzyl)-6-(D-ribitylimino)-5,6-dihydrouracil from 5-amino-6-(D-ribitylamino)uracil and L-tyrosine. The protein is 5-amino-6-(D-ribitylamino)uracil--L-tyrosine 4-hydroxyphenyl transferase of Nostoc sp. (strain PCC 7120 / SAG 25.82 / UTEX 2576).